The chain runs to 129 residues: Small ribosomal subunit protein uS8my (129 aa).

The protein belongs to the universal ribosomal protein uS8 family. As to quaternary structure, component of the mitochondrial ribosome small subunit.

The protein resides in the mitochondrion. The sequence is that of Small ribosomal subunit protein uS8my (RPS15AE) from Arabidopsis thaliana (Mouse-ear cress).